The following is a 287-amino-acid chain: uncharacterized protein (287 aa).

Positions 133–239 constitute a THUMP domain; it reads CEVGKTKKMT…KNIIGISIVQ (107 aa). A disordered region spans residues 257-287; sequence ENTKSIPNDSKLDNFDRDKNQIINDKAEHAE. Residues 266 to 287 are compositionally biased toward basic and acidic residues; that stretch reads SKLDNFDRDKNQIINDKAEHAE.

This is an uncharacterized protein from Schizosaccharomyces pombe (strain 972 / ATCC 24843) (Fission yeast).